Consider the following 497-residue polypeptide: Bloodstream-specific protein 2 (497 aa).

Residues 1–14 form the signal peptide; that stretch reads MRAIFLVALALATM. The region spanning 15–124 is the Thioredoxin 1 domain; the sequence is RESTAESLKL…IIKYIKANVG (110 aa). A glycan (N-linked (GlcNAc...) asparagine) is linked at Asn30. A disulfide bridge links Cys48 with Cys51. Asn63, Asn85, Asn153, Asn154, Asn250, and Asn278 each carry an N-linked (GlcNAc...) asparagine glycan. One can recognise a Thioredoxin 2 domain in the interval 334-455; it reads EPTIKSLPVP…VYEFVRKHVT (122 aa). Catalysis depends on nucleophile residues Cys378 and Cys381. Cys378 and Cys381 are oxidised to a cystine. N-linked (GlcNAc...) asparagine glycosylation is found at Asn413, Asn465, Asn476, Asn482, Asn485, and Asn488. Residues 461–497 form a disordered region; sequence EKPANVTEEKKSEEENKSSKSNESNDSNESNVDKQDL. A compositionally biased stretch (basic and acidic residues) spans 467 to 480; the sequence is TEEKKSEEENKSSK. A compositionally biased stretch (low complexity) spans 481–490; it reads SNESNDSNES.

The protein belongs to the protein disulfide isomerase family.

In Trypanosoma brucei brucei, this protein is Bloodstream-specific protein 2 (BS2).